Reading from the N-terminus, the 224-residue chain is Ribosomal RNA small subunit methyltransferase G (224 aa).

Residues Gly-89, Phe-94, 140–141 (AE), and Arg-153 each bind S-adenosyl-L-methionine.

It belongs to the methyltransferase superfamily. RNA methyltransferase RsmG family.

The protein localises to the cytoplasm. In terms of biological role, specifically methylates the N7 position of a guanine in 16S rRNA. The chain is Ribosomal RNA small subunit methyltransferase G from Bacteroides fragilis (strain YCH46).